The sequence spans 335 residues: Ketol-acid reductoisomerase (NADP(+)) (335 aa).

Positions 5-185 (SKIYTDNDAN…GATRAGVIPT (181 aa)) constitute a KARI N-terminal Rossmann domain. NADP(+)-binding positions include 28–31 (YGSQ), serine 56, and 86–89 (DMVQ). Histidine 111 is a catalytic residue. Glycine 137 serves as a coordination point for NADP(+). The KARI C-terminal knotted domain maps to 186 to 331 (TFKEETETDL…NQLRDLVQKG (146 aa)). Mg(2+) contacts are provided by aspartate 194, glutamate 198, glutamate 230, and glutamate 234. Serine 255 contributes to the substrate binding site.

This sequence belongs to the ketol-acid reductoisomerase family. Mg(2+) serves as cofactor.

The catalysed reaction is (2R)-2,3-dihydroxy-3-methylbutanoate + NADP(+) = (2S)-2-acetolactate + NADPH + H(+). The enzyme catalyses (2R,3R)-2,3-dihydroxy-3-methylpentanoate + NADP(+) = (S)-2-ethyl-2-hydroxy-3-oxobutanoate + NADPH + H(+). Its pathway is amino-acid biosynthesis; L-isoleucine biosynthesis; L-isoleucine from 2-oxobutanoate: step 2/4. It participates in amino-acid biosynthesis; L-valine biosynthesis; L-valine from pyruvate: step 2/4. Functionally, involved in the biosynthesis of branched-chain amino acids (BCAA). Catalyzes an alkyl-migration followed by a ketol-acid reduction of (S)-2-acetolactate (S2AL) to yield (R)-2,3-dihydroxy-isovalerate. In the isomerase reaction, S2AL is rearranged via a Mg-dependent methyl migration to produce 3-hydroxy-3-methyl-2-ketobutyrate (HMKB). In the reductase reaction, this 2-ketoacid undergoes a metal-dependent reduction by NADPH to yield (R)-2,3-dihydroxy-isovalerate. This chain is Ketol-acid reductoisomerase (NADP(+)), found in Saccharolobus solfataricus (strain ATCC 35092 / DSM 1617 / JCM 11322 / P2) (Sulfolobus solfataricus).